The primary structure comprises 181 residues: Inner membrane-spanning protein YciB (181 aa).

5 helical membrane passes run 22–42, 50–70, 72–92, 118–138, and 148–168; these read IYTA…ILYF, MHLV…AFHD, AFIK…LAVS, VTWY…YVAF, and FKVF…VFYI.

The protein belongs to the YciB family.

Its subcellular location is the cell inner membrane. In terms of biological role, plays a role in cell envelope biogenesis, maintenance of cell envelope integrity and membrane homeostasis. This is Inner membrane-spanning protein YciB from Shewanella denitrificans (strain OS217 / ATCC BAA-1090 / DSM 15013).